The chain runs to 442 residues: Tyrosine-protein kinase transforming protein RYK (442 aa).

Residues 45-316 form the Protein kinase domain; that stretch reads LSLGKVLGEG…QLKVHLEKLL (272 aa). ATP is bound by residues 51–59 and K77; that span reads LGEGEFGSV. D181 acts as the Proton acceptor in catalysis. Y212 bears the Phosphotyrosine; by autocatalysis mark.

The protein belongs to the protein kinase superfamily. Tyr protein kinase family. AXL/UFO subfamily.

It localises to the host cell membrane. It catalyses the reaction L-tyrosyl-[protein] + ATP = O-phospho-L-tyrosyl-[protein] + ADP + H(+). In Avian retrovirus RPL30, this protein is Tyrosine-protein kinase transforming protein RYK (V-RYK).